A 307-amino-acid polypeptide reads, in one-letter code: MQETTILILGAGAWGASLANLALANGHRVRVWSRRGTETLAALLEDVDIILSAISMKGVREVASQIQSLTPSPETIFVTATKGLEPETIYTPSQIWQSCFPNHPVVVLSGPNLSKEIDQSLPAATVVASRIATAAATVQLAFSSSRFRVYTNPDPIGVELGGTLKNVIAIASGVCDGLHLGTNAKAALVTRGLTEMVRIGNCWGAKTETFYGLSGLGDLLATCNSPLSRNYQVGYQLAGGQTLAQILAKLPGTAEGVNTCQVLVQLARQQNIVIPITEQVYRLLQGEVTPQQALDELMLRDIKPEYN.

NADPH contacts are provided by W14, R34, R35, and K82. 2 residues coordinate sn-glycerol 3-phosphate: K82 and G110. S114 contacts NADPH. Residues K165, D218, S228, R229, and N230 each coordinate sn-glycerol 3-phosphate. The active-site Proton acceptor is K165. R229 provides a ligand contact to NADPH. E255 provides a ligand contact to NADPH.

It belongs to the NAD-dependent glycerol-3-phosphate dehydrogenase family.

The protein resides in the cytoplasm. It carries out the reaction sn-glycerol 3-phosphate + NAD(+) = dihydroxyacetone phosphate + NADH + H(+). It catalyses the reaction sn-glycerol 3-phosphate + NADP(+) = dihydroxyacetone phosphate + NADPH + H(+). The protein operates within membrane lipid metabolism; glycerophospholipid metabolism. Functionally, catalyzes the reduction of the glycolytic intermediate dihydroxyacetone phosphate (DHAP) to sn-glycerol 3-phosphate (G3P), the key precursor for phospholipid synthesis. The chain is Glycerol-3-phosphate dehydrogenase [NAD(P)+] from Trichormus variabilis (strain ATCC 29413 / PCC 7937) (Anabaena variabilis).